Consider the following 466-residue polypeptide: GVGFKAGVKDYKLTYYTPDYQTQDTDILAAFRVTPQPGVPPEEAGAAVAAESSTGTWTTVWTDGLTSLDRYKGRCYHIEPVAGEENQFIAYVAYPLDLFEEGSVTNMFTSIVGNVFGFKALRALRLEDLRIPPAYTKTFQGPPHGIQVERDKLNKYGRPLLGCTIKPKLGLSAKNYGRAVYECLRGGLDFTKDDENVNSQPFMRWRDRFLFCAEAIYKAQAETGEIKGHYLNATAGTCEEMIKRAVFARELGVPIVMHDYLTGGFTANTSLAHYCRDNGLLLHIHRAMHAVIDRQKNHGIHFRVLAKALRLSGGDHIHSGTVVGKLEGEREITLGFVDLLRDDNTEKDRSRGIYFTQSWVSLPGVLPVASGGIHVWHMPALTEIFGDDSVLQFGGGTLGHPWGNPPGAVANRVALEACVQARNEGRDLAREGNEIIREASKWSPELAAACEVWKEIKFEFPAMDTL.

K5 carries the post-translational modification N6,N6,N6-trimethyllysine. Substrate is bound by residues N114 and T164. K166 functions as the Proton acceptor in the catalytic mechanism. K168 is a binding site for substrate. Mg(2+)-binding residues include K192, D194, and E195. K192 is subject to N6-carboxylysine. Catalysis depends on H285, which acts as the Proton acceptor. Residues R286, H318, and S370 each coordinate substrate.

The protein belongs to the RuBisCO large chain family. Type I subfamily. Heterohexadecamer of 8 large chains and 8 small chains; disulfide-linked. The disulfide link is formed within the large subunit homodimers. Mg(2+) is required as a cofactor. Post-translationally, the disulfide bond which can form in the large chain dimeric partners within the hexadecamer appears to be associated with oxidative stress and protein turnover.

Its subcellular location is the plastid. The protein resides in the chloroplast. It carries out the reaction 2 (2R)-3-phosphoglycerate + 2 H(+) = D-ribulose 1,5-bisphosphate + CO2 + H2O. The catalysed reaction is D-ribulose 1,5-bisphosphate + O2 = 2-phosphoglycolate + (2R)-3-phosphoglycerate + 2 H(+). Its function is as follows. RuBisCO catalyzes two reactions: the carboxylation of D-ribulose 1,5-bisphosphate, the primary event in carbon dioxide fixation, as well as the oxidative fragmentation of the pentose substrate in the photorespiration process. Both reactions occur simultaneously and in competition at the same active site. In Drosophyllum lusitanicum (Portuguese sundew), this protein is Ribulose bisphosphate carboxylase large chain.